A 352-amino-acid polypeptide reads, in one-letter code: Pollen-specific protein SF21 (352 aa).

Belongs to the NDRG family. In terms of tissue distribution, pollen.

The sequence is that of Pollen-specific protein SF21 (SF21) from Helianthus annuus (Common sunflower).